A 295-amino-acid chain; its full sequence is Histone deacetylase HDT1 (295 aa).

The interval 105–271 (SDFSDSSEED…TPNSAGQLSC (167 aa)) is disordered. The span at 109–118 (DSSEEDEELA) shows a compositional bias: acidic residues. A compositionally biased stretch (basic and acidic residues) spans 123-135 (DNGKPELKAEGAK). A compositionally biased stretch (acidic residues) spans 159–199 (EDDDSDDESDDDLAGEDESGSSDEMDDDSNSEEESDGDDEE). The segment covering 200-213 (TPAKKVDQGKKRPN) has biased composition (basic and acidic residues). Residues 254–271 (TPNSTKGQTPNSAGQLSC) show a composition bias toward polar residues. The C2H2-type zinc-finger motif lies at 269-292 (LSCASCKKSFTNEAGLQQHKKAKH).

Belongs to the histone deacetylase HD2 family.

It is found in the nucleus. It localises to the nucleolus. Its function is as follows. Mediates the deacetylation of lysine residues on the N-terminal part of the core histones (H2A, H2B, H3 and H4). Histone deacetylation gives a tag for epigenetic repression and plays an important role in transcriptional regulation, cell cycle progression and developmental events. The chain is Histone deacetylase HDT1 (HDT1) from Glycine max (Soybean).